Here is a 362-residue protein sequence, read N- to C-terminus: Histidinol-phosphate aminotransferase (362 aa).

Lysine 218 carries the post-translational modification N6-(pyridoxal phosphate)lysine.

The protein belongs to the class-II pyridoxal-phosphate-dependent aminotransferase family. Histidinol-phosphate aminotransferase subfamily. As to quaternary structure, homodimer. Requires pyridoxal 5'-phosphate as cofactor.

The enzyme catalyses L-histidinol phosphate + 2-oxoglutarate = 3-(imidazol-4-yl)-2-oxopropyl phosphate + L-glutamate. It functions in the pathway amino-acid biosynthesis; L-histidine biosynthesis; L-histidine from 5-phospho-alpha-D-ribose 1-diphosphate: step 7/9. This Xanthomonas campestris pv. campestris (strain B100) protein is Histidinol-phosphate aminotransferase.